The following is an 80-amino-acid chain: Cell division activator CedA (80 aa).

Belongs to the CedA family.

Its function is as follows. Activates the cell division inhibited by chromosomal DNA over-replication. The protein is Cell division activator CedA of Salmonella choleraesuis (strain SC-B67).